The chain runs to 146 residues: ATP synthase epsilon chain (146 aa).

Basic and acidic residues predominate over residues 92-116; it reads ISVDQARRDRDSLRKKLNEHERSEQ. A disordered region spans residues 92–120; the sequence is ISVDQARRDRDSLRKKLNEHERSEQDPEV.

It belongs to the ATPase epsilon chain family. F-type ATPases have 2 components, CF(1) - the catalytic core - and CF(0) - the membrane proton channel. CF(1) has five subunits: alpha(3), beta(3), gamma(1), delta(1), epsilon(1). CF(0) has three main subunits: a, b and c.

It is found in the cell membrane. Produces ATP from ADP in the presence of a proton gradient across the membrane. This chain is ATP synthase epsilon chain, found in Cutibacterium acnes (strain DSM 16379 / KPA171202) (Propionibacterium acnes).